Consider the following 336-residue polypeptide: Holliday junction branch migration complex subunit RuvB (336 aa).

The interval Ala-4–Tyr-184 is large ATPase domain (RuvB-L). Residues Ile-23, Arg-24, Gly-65, Lys-68, Thr-69, Thr-70, Glu-131–Tyr-133, Arg-174, Tyr-184, and Arg-221 contribute to the ATP site. Thr-69 contacts Mg(2+). The tract at residues Gln-185–Asn-255 is small ATPAse domain (RuvB-S). Positions Ala-258 to Pro-336 are head domain (RuvB-H). Residues Arg-294, Arg-313, and Arg-318 each coordinate DNA.

The protein belongs to the RuvB family. In terms of assembly, homohexamer. Forms an RuvA(8)-RuvB(12)-Holliday junction (HJ) complex. HJ DNA is sandwiched between 2 RuvA tetramers; dsDNA enters through RuvA and exits via RuvB. An RuvB hexamer assembles on each DNA strand where it exits the tetramer. Each RuvB hexamer is contacted by two RuvA subunits (via domain III) on 2 adjacent RuvB subunits; this complex drives branch migration. In the full resolvosome a probable DNA-RuvA(4)-RuvB(12)-RuvC(2) complex forms which resolves the HJ.

It is found in the cytoplasm. The catalysed reaction is ATP + H2O = ADP + phosphate + H(+). Functionally, the RuvA-RuvB-RuvC complex processes Holliday junction (HJ) DNA during genetic recombination and DNA repair, while the RuvA-RuvB complex plays an important role in the rescue of blocked DNA replication forks via replication fork reversal (RFR). RuvA specifically binds to HJ cruciform DNA, conferring on it an open structure. The RuvB hexamer acts as an ATP-dependent pump, pulling dsDNA into and through the RuvAB complex. RuvB forms 2 homohexamers on either side of HJ DNA bound by 1 or 2 RuvA tetramers; 4 subunits per hexamer contact DNA at a time. Coordinated motions by a converter formed by DNA-disengaged RuvB subunits stimulates ATP hydrolysis and nucleotide exchange. Immobilization of the converter enables RuvB to convert the ATP-contained energy into a lever motion, pulling 2 nucleotides of DNA out of the RuvA tetramer per ATP hydrolyzed, thus driving DNA branch migration. The RuvB motors rotate together with the DNA substrate, which together with the progressing nucleotide cycle form the mechanistic basis for DNA recombination by continuous HJ branch migration. Branch migration allows RuvC to scan DNA until it finds its consensus sequence, where it cleaves and resolves cruciform DNA. This Shigella boydii serotype 18 (strain CDC 3083-94 / BS512) protein is Holliday junction branch migration complex subunit RuvB.